Here is a 162-residue protein sequence, read N- to C-terminus: NADPH-dependent 7-cyano-7-deazaguanine reductase (162 aa).

The active-site Thioimide intermediate is the cysteine 53. Aspartate 60 acts as the Proton donor in catalysis. Substrate is bound by residues 75-77 (VES) and 94-95 (HE).

This sequence belongs to the GTP cyclohydrolase I family. QueF type 1 subfamily.

The protein localises to the cytoplasm. The enzyme catalyses 7-aminomethyl-7-carbaguanine + 2 NADP(+) = 7-cyano-7-deazaguanine + 2 NADPH + 3 H(+). Its pathway is tRNA modification; tRNA-queuosine biosynthesis. Catalyzes the NADPH-dependent reduction of 7-cyano-7-deazaguanine (preQ0) to 7-aminomethyl-7-deazaguanine (preQ1). The sequence is that of NADPH-dependent 7-cyano-7-deazaguanine reductase from Exiguobacterium sp. (strain ATCC BAA-1283 / AT1b).